A 292-amino-acid chain; its full sequence is MLKSTDLKNESEMSRVKVLSEALPYIQKFTGRKIVVKYGGAAMRDSNVKDQVMRDIVLLSCVGIRPIVVHGGGPEINSWLGKLGIEPQFKDGLRVTDASTMEVVEMVLVGKVNKEIVSLINQAGGCAVGLCGKDASLIQARPEGIEGIGFVGEVSNVKIDILQSLVDNGYIPVVSSVATDEQGQAYNLNADTVAGEIAAAMEAEKLILLTDTAGILEDYHNPDSLIVKLDIQEARELIEKGIVSGGMIPKVNCCVRSLAQGVRAAHILDGRVPHVLLQEILTDTGVGSMIVA.

Substrate-binding positions include 72–73 (GG), Arg94, and Asn187.

The protein belongs to the acetylglutamate kinase family. ArgB subfamily.

The protein localises to the cytoplasm. The enzyme catalyses N-acetyl-L-glutamate + ATP = N-acetyl-L-glutamyl 5-phosphate + ADP. It participates in amino-acid biosynthesis; L-arginine biosynthesis; N(2)-acetyl-L-ornithine from L-glutamate: step 2/4. Catalyzes the ATP-dependent phosphorylation of N-acetyl-L-glutamate. The polypeptide is Acetylglutamate kinase (Trichodesmium erythraeum (strain IMS101)).